The chain runs to 468 residues: Probable 1,4-beta-D-glucan cellobiohydrolase C (468 aa).

The N-terminal stretch at 1–18 (MGRVSSLALALLLPAVQA) is a signal peptide. Residues 19–54 (QQTLWGQCGGIGWTGPTNCVAGAACSTQNPYYAQCL) enclose the CBM1 domain. 2 disulfide bridges follow: cysteine 26–cysteine 43 and cysteine 37–cysteine 53. Residues 57–106 (TATTSTTLTTTTRVTTTTTSTTSKSSSTGSTTTTKSTGTTTTSGSSTTIT) form a thr-rich linker region. The interval 68–107 (TRVTTTTTSTTSKSSSTGSTTTTKSTGTTTTSGSSTTITS) is disordered. The catalytic stretch occupies residues 107–468 (SAPSGNPFSG…QLLKNANPAF (362 aa)). Aspartate 198 is a catalytic residue. 2 disulfide bridges follow: cysteine 199–cysteine 258 and cysteine 390–cysteine 437. Aspartate 244 serves as the catalytic Proton donor. Residue aspartate 423 is the Nucleophile of the active site.

It belongs to the glycosyl hydrolase 6 (cellulase B) family.

It is found in the secreted. It carries out the reaction Hydrolysis of (1-&gt;4)-beta-D-glucosidic linkages in cellulose and cellotetraose, releasing cellobiose from the non-reducing ends of the chains.. The biological conversion of cellulose to glucose generally requires three types of hydrolytic enzymes: (1) Endoglucanases which cut internal beta-1,4-glucosidic bonds; (2) Exocellobiohydrolases that cut the disaccharide cellobiose from the non-reducing end of the cellulose polymer chain; (3) Beta-1,4-glucosidases which hydrolyze the cellobiose and other short cello-oligosaccharides to glucose. This Aspergillus terreus (strain NIH 2624 / FGSC A1156) protein is Probable 1,4-beta-D-glucan cellobiohydrolase C (cbhC).